We begin with the raw amino-acid sequence, 183 residues long: Casparian strip membrane protein 2 (183 aa).

The Cytoplasmic portion of the chain corresponds to 1–23 (MDSGEQGETSKAPLNKGVSRGVS). The helical transmembrane segment at 24–44 (ILDLILRVIAVISTLASAIAM) threads the bilayer. At 45–71 (GTTNETLPLFTPFIQFKARYSDLPALT) the chain is on the extracellular side. N48 is a glycosylation site (N-linked (GlcNAc...) asparagine). A helical membrane pass occupies residues 72–92 (FFVVANSIVSAYLILSLPLSI). Residues 93–104 (AHIIRSGAKYSR) lie on the Cytoplasmic side of the membrane. The helical transmembrane segment at 105 to 125 (LVLIIFDAAMLALVTAASSAA) threads the bilayer. Residues 126 to 158 (TAIVYLAHKGNVRANWLAICQQLDSFCERTSGS) lie on the Extracellular side of the membrane. Residues 159–179 (LVGSFGAMVLLILLILLSAMA) traverse the membrane as a helical segment. Residues 180 to 183 (LARR) lie on the Cytoplasmic side of the membrane.

The protein belongs to the Casparian strip membrane proteins (CASP) family. Homodimer and heterodimers.

It localises to the cell membrane. Regulates membrane-cell wall junctions and localized cell wall deposition. Required for establishment of the Casparian strip membrane domain (CSD) and the subsequent formation of Casparian strips, a cell wall modification of the root endodermis that determines an apoplastic barrier between the intraorganismal apoplasm and the extraorganismal apoplasm and prevents lateral diffusion. The sequence is that of Casparian strip membrane protein 2 from Triticum aestivum (Wheat).